A 448-amino-acid chain; its full sequence is MSGSYDDSVGVEVSSDSFWEVGNYKRTVKRIDDGHRLCNDLMNCIHERARIEKVYAQQLTEWAKRWKQLVEKGPQYGTVERAWCAFMSEAEKVSELHLEVKGSLMNEDFEKIKNWQKEAFHKQMMGGFKETKEAEDGFRKAQKPWAKKLKEVEAAKKAYHAACKEEKLAISRETNSKADPALNPEQLKKLQDKVERSKQDVLKTKAKYEKSLKELDNATPQYMENMEQVFEQCQQFEEKRLRFFREVLLEVQKHLDLSNVASYKNIYRELEQNIKTADAVEDLRWFRANQGPGMSMNWPQFEDDEWSADLNRTLSRREKKKASDGVTLTGINQTGDQVSQPNKHSSVSSYEKNQSYPTDWSDEESNNPFSSTDAKGDTNPFDEDTSPVMEVRVRALYDYEGQEQDELSFKAGDELTKMENEDEQGWCKGRLDNGQVGLYPANYVEPIQ.

Residues 11–282 (VEVSSDSFWE…NIKTADAVED (272 aa)) enclose the F-BAR domain. The stretch at 25 to 274 (KRTVKRIDDG…NIYRELEQNI (250 aa)) forms a coiled coil. The disordered stretch occupies residues 315–386 (SRREKKKASD…DTNPFDEDTS (72 aa)). A compositionally biased stretch (polar residues) spans 329–358 (TGINQTGDQVSQPNKHSSVSSYEKNQSYPT). Residues 367 to 369 (NPF) carry the NPF1 motif. The NPF2 motif lies at 379–381 (NPF). The region spanning 388-448 (VMEVRVRALY…YPANYVEPIQ (61 aa)) is the SH3 domain.

The protein belongs to the PACSIN family. Post-translationally, phosphorylated on serine residues. As to expression, detected in intestine, cardiac muscle, lung and brain (at protein level). Expressed in all tissues tested, including, gizzard, liver, cardiac muscle, skeletal muscle and skin.

Its subcellular location is the cytoplasm. It is found in the cytoskeleton. The protein localises to the cytoplasmic vesicle membrane. It localises to the cell projection. The protein resides in the ruffle membrane. Its subcellular location is the early endosome. It is found in the recycling endosome membrane. The protein localises to the cell membrane. It localises to the membrane. The protein resides in the caveola. Its subcellular location is the cell junction. It is found in the focal adhesion. Its function is as follows. Regulates the morphogenesis and endocytosis of caveolae. Lipid-binding protein that is able to promote the tubulation of the phosphatidic acid-containing membranes it preferentially binds. Plays a role in intracellular vesicle-mediated transport. Involved in the endocytosis of cell-surface receptors like the EGF receptor, contributing to its internalization in the absence of EGF stimulus. Essential for endothelial organization in sprouting angiogenesis, modulates CDH5-based junctions. Facilitates endothelial front-rear polarity during migration by recruiting EHD4 and MICALL1 to asymmetric adherens junctions between leader and follower cells. The polypeptide is Protein kinase C and casein kinase substrate in neurons protein 2 (PACSIN2) (Gallus gallus (Chicken)).